We begin with the raw amino-acid sequence, 201 residues long: Lipopolysaccharide core heptose(II)-phosphate phosphatase (201 aa).

The first 35 residues, 1–35, serve as a signal peptide directing secretion; sequence MLAFTLRFIKNKRYLATLAGALVIIAGLTSQHAWS.

Belongs to the phosphoglycerate mutase family. Ais subfamily.

It is found in the periplasm. It participates in bacterial outer membrane biogenesis; lipopolysaccharide metabolism. Its function is as follows. Catalyzes the dephosphorylation of heptose(II) of the outer membrane lipopolysaccharide core. The protein is Lipopolysaccharide core heptose(II)-phosphate phosphatase of Salmonella choleraesuis (strain SC-B67).